We begin with the raw amino-acid sequence, 25 residues long: Pancreatic triacylglycerol lipase (25 aa).

An intrachain disulfide couples cysteine 4 to cysteine 10.

It belongs to the AB hydrolase superfamily. Lipase family. Forms a 1:1 stoichiometric complex with (pro)colipase/CLPS.

It localises to the secreted. It catalyses the reaction a triacylglycerol + H2O = a diacylglycerol + a fatty acid + H(+). The enzyme catalyses 1,2,3-tributanoylglycerol + H2O = dibutanoylglycerol + butanoate + H(+). It carries out the reaction 1,2,3-tri-(9Z-octadecenoyl)-glycerol + H2O = di-(9Z)-octadecenoylglycerol + (9Z)-octadecenoate + H(+). The catalysed reaction is all-trans-retinyl hexadecanoate + H2O = all-trans-retinol + hexadecanoate + H(+). It catalyses the reaction 1,2-di-(9Z-octadecenoyl)-glycerol + H2O = (9Z-octadecenoyl)-glycerol + (9Z)-octadecenoate + H(+). Inhibited by bile salts, is reactivated by (pro)colipase/CLPS. Functionally, plays an important role in fat metabolism. It preferentially splits the esters of long-chain fatty acids at positions 1 and 3, producing mainly 2-monoacylglycerol and free fatty acids, and shows considerably higher activity against insoluble emulsified substrates than against soluble ones. This Felis catus (Cat) protein is Pancreatic triacylglycerol lipase (PNLIP).